A 373-amino-acid chain; its full sequence is Flagellar P-ring protein (373 aa).

A signal peptide spans 1 to 27 (MPSFSPTLLKLAAAALSALLLSGVAAS).

Belongs to the FlgI family. As to quaternary structure, the basal body constitutes a major portion of the flagellar organelle and consists of four rings (L,P,S, and M) mounted on a central rod.

The protein resides in the periplasm. It localises to the bacterial flagellum basal body. In terms of biological role, assembles around the rod to form the L-ring and probably protects the motor/basal body from shearing forces during rotation. This Rhodopseudomonas palustris (strain BisB5) protein is Flagellar P-ring protein.